The sequence spans 232 residues: Ribonuclease P protein component 3 (232 aa).

The protein belongs to the eukaryotic/archaeal RNase P protein component 3 family. In terms of assembly, consists of a catalytic RNA component and at least 4-5 protein subunits.

It localises to the cytoplasm. The enzyme catalyses Endonucleolytic cleavage of RNA, removing 5'-extranucleotides from tRNA precursor.. Functionally, part of ribonuclease P, a protein complex that generates mature tRNA molecules by cleaving their 5'-ends. In Halobacterium salinarum (strain ATCC 29341 / DSM 671 / R1), this protein is Ribonuclease P protein component 3.